Consider the following 484-residue polypeptide: tRNA sulfurtransferase (484 aa).

One can recognise a THUMP domain in the interval 63–167; that stretch reads QAFGERLACI…GDKLYMVTKR (105 aa). ATP is bound by residues 185 to 186, Lys-267, Gly-289, and Gln-298; that span reads LI. Residues Cys-346 and Cys-458 are joined by a disulfide bond. The 79-residue stretch at 406–484 folds into the Rhodanese domain; it reads IDTNEVVIDI…GYHNVKVYRP (79 aa). Cys-458 acts as the Cysteine persulfide intermediate in catalysis.

This sequence belongs to the ThiI family.

It is found in the cytoplasm. It carries out the reaction [ThiI sulfur-carrier protein]-S-sulfanyl-L-cysteine + a uridine in tRNA + 2 reduced [2Fe-2S]-[ferredoxin] + ATP + H(+) = [ThiI sulfur-carrier protein]-L-cysteine + a 4-thiouridine in tRNA + 2 oxidized [2Fe-2S]-[ferredoxin] + AMP + diphosphate. The enzyme catalyses [ThiS sulfur-carrier protein]-C-terminal Gly-Gly-AMP + S-sulfanyl-L-cysteinyl-[cysteine desulfurase] + AH2 = [ThiS sulfur-carrier protein]-C-terminal-Gly-aminoethanethioate + L-cysteinyl-[cysteine desulfurase] + A + AMP + 2 H(+). Its pathway is cofactor biosynthesis; thiamine diphosphate biosynthesis. Functionally, catalyzes the ATP-dependent transfer of a sulfur to tRNA to produce 4-thiouridine in position 8 of tRNAs, which functions as a near-UV photosensor. Also catalyzes the transfer of sulfur to the sulfur carrier protein ThiS, forming ThiS-thiocarboxylate. This is a step in the synthesis of thiazole, in the thiamine biosynthesis pathway. The sulfur is donated as persulfide by IscS. The sequence is that of tRNA sulfurtransferase from Shewanella sp. (strain MR-7).